The sequence spans 341 residues: Heme A synthase (341 aa).

The next 8 membrane-spanning stretches (helical) occupy residues 7–27 (VTVWLGVCCSMTLLMVVIGGI), 92–112 (LFGRALGAVFCLPIPYFAITK), 118–138 (MVAKLLMVALLGGMQGAMGWF), 159–179 (LFLTILLFSILWHSFLRCAGV), 190–210 (FFTAAAVVGLTVLQMVLGALV), 253–273 (FLHRLVAVLIVVCAAPLPFWL), 280–300 (LFLACVALQFLLGVATLVSVV), and 302–322 (IFLAAMHQVFGFVTLAAGVHM). Residue H255 participates in heme binding. H308 serves as a coordination point for heme.

It belongs to the COX15/CtaA family. Type 2 subfamily. As to quaternary structure, interacts with CtaB. Requires heme b as cofactor.

The protein localises to the cell membrane. The catalysed reaction is Fe(II)-heme o + 2 A + H2O = Fe(II)-heme a + 2 AH2. Its pathway is porphyrin-containing compound metabolism; heme A biosynthesis; heme A from heme O: step 1/1. In terms of biological role, catalyzes the conversion of heme O to heme A by two successive hydroxylations of the methyl group at C8. The first hydroxylation forms heme I, the second hydroxylation results in an unstable dihydroxymethyl group, which spontaneously dehydrates, resulting in the formyl group of heme A. This Anaplasma marginale (strain Florida) protein is Heme A synthase.